Consider the following 145-residue polypeptide: Putative pre-16S rRNA nuclease (145 aa).

Belongs to the YqgF nuclease family.

The protein resides in the cytoplasm. In terms of biological role, could be a nuclease involved in processing of the 5'-end of pre-16S rRNA. The chain is Putative pre-16S rRNA nuclease from Pseudomonas fluorescens.